The following is a 509-amino-acid chain: UDP-N-acetylmuramoylalanine--D-glutamate ligase (509 aa).

116–122 (GTNGKST) provides a ligand contact to ATP.

The protein belongs to the MurCDEF family.

Its subcellular location is the cytoplasm. The enzyme catalyses UDP-N-acetyl-alpha-D-muramoyl-L-alanine + D-glutamate + ATP = UDP-N-acetyl-alpha-D-muramoyl-L-alanyl-D-glutamate + ADP + phosphate + H(+). It functions in the pathway cell wall biogenesis; peptidoglycan biosynthesis. Functionally, cell wall formation. Catalyzes the addition of glutamate to the nucleotide precursor UDP-N-acetylmuramoyl-L-alanine (UMA). The chain is UDP-N-acetylmuramoylalanine--D-glutamate ligase from Wolbachia pipientis wMel.